A 523-amino-acid polypeptide reads, in one-letter code: MSTDHIRRPIRRALISVYDKTGLVDLAQGLTAAGVEIVSTGSTAKTIASKGIPVTRVEELTGFPEVLDGRVKTLHPRVHAGLLADLRNPEHEAALAELGVEAFELVVVNLYPFSQTVESGASVDECVEQIDIGGPSMVRAAAKNHPSVAVVTDPQGYDGVLAAVSSGGFTLAERKKLASLAFQHTAEYDIAVASWMQSTVAPEQPETDFPRWFGRNWRRQAMLRYGENPHQQAALYADPGAWPGLAQAEQLHGKEMSYNNFTDADAAWRAAFDHEQKCVAIIKHANPCGIAISEVSVADAHRKAHACDPLSAYGGVIACNTEVSPEMAEYVSTIFTEVIVAPAYAPAALDQLTKKKNIRVLVASEPQDGGAELRPISGGLLMQQRDQLDAAGDNPANWTLATGSPADPATLTDLVFAWRSCRAVKSNAIVIVADGATIGVGMGQVNRVDAARLAVERGGERVNGAVAASDAFFPFPDGLETLTAAGVKAIVHPGGSVRDEEVTAAAAKAGITLYLTGSRHFAH.

One can recognise an MGS-like domain in the interval 4 to 152 (DHIRRPIRRA…KNHPSVAVVT (149 aa)).

This sequence belongs to the PurH family.

It carries out the reaction (6R)-10-formyltetrahydrofolate + 5-amino-1-(5-phospho-beta-D-ribosyl)imidazole-4-carboxamide = 5-formamido-1-(5-phospho-D-ribosyl)imidazole-4-carboxamide + (6S)-5,6,7,8-tetrahydrofolate. The enzyme catalyses IMP + H2O = 5-formamido-1-(5-phospho-D-ribosyl)imidazole-4-carboxamide. It functions in the pathway purine metabolism; IMP biosynthesis via de novo pathway; 5-formamido-1-(5-phospho-D-ribosyl)imidazole-4-carboxamide from 5-amino-1-(5-phospho-D-ribosyl)imidazole-4-carboxamide (10-formyl THF route): step 1/1. It participates in purine metabolism; IMP biosynthesis via de novo pathway; IMP from 5-formamido-1-(5-phospho-D-ribosyl)imidazole-4-carboxamide: step 1/1. The chain is Bifunctional purine biosynthesis protein PurH from Mycobacterium marinum (strain ATCC BAA-535 / M).